The sequence spans 203 residues: Protein GrpE (203 aa).

Residues 1-10 (MSNESIKAEQ) are compositionally biased toward basic and acidic residues. Positions 1–20 (MSNESIKAEQDLIQEGVESE) are disordered.

The protein belongs to the GrpE family. In terms of assembly, homodimer.

It is found in the cytoplasm. Functionally, participates actively in the response to hyperosmotic and heat shock by preventing the aggregation of stress-denatured proteins, in association with DnaK and GrpE. It is the nucleotide exchange factor for DnaK and may function as a thermosensor. Unfolded proteins bind initially to DnaJ; upon interaction with the DnaJ-bound protein, DnaK hydrolyzes its bound ATP, resulting in the formation of a stable complex. GrpE releases ADP from DnaK; ATP binding to DnaK triggers the release of the substrate protein, thus completing the reaction cycle. Several rounds of ATP-dependent interactions between DnaJ, DnaK and GrpE are required for fully efficient folding. This chain is Protein GrpE, found in Shewanella sp. (strain MR-4).